Here is a 608-residue protein sequence, read N- to C-terminus: Myosin light chain kinase 2, skeletal/cardiac muscle (608 aa).

The tract at residues Met1–Pro160 is disordered. The residue at position 2 (Ala2) is an N-acetylalanine. Basic and acidic residues-rich tracts occupy residues Ala31–Lys43 and Thr50–Ala63. Over residues Gly82–Gly91 the composition is skewed to gly residues. A compositionally biased stretch (basic and acidic residues) spans Ala116–Pro127. 3 positions are modified to phosphoserine: Ser153, Ser159, and Ser161. The interval Gln214–Ser235 is disordered. In terms of domain architecture, Protein kinase spans Met297–Leu552. Residues Leu303 to Val311 and Lys326 each bind ATP. Asp418 functions as the Proton acceptor in the catalytic mechanism. Thr457 is modified (phosphothreonine). Residues Ile586–Ser598 are calmodulin-binding.

Belongs to the protein kinase superfamily. CAMK Ser/Thr protein kinase family. May interact with centrin.

The protein resides in the cytoplasm. It carries out the reaction L-seryl-[myosin light chain] + ATP = O-phospho-L-seryl-[myosin light chain] + ADP + H(+). The enzyme catalyses L-threonyl-[myosin light chain] + ATP = O-phospho-L-threonyl-[myosin light chain] + ADP + H(+). Implicated in the level of global muscle contraction and cardiac function. Phosphorylates a specific serine in the N-terminus of a myosin light chain. The polypeptide is Myosin light chain kinase 2, skeletal/cardiac muscle (MYLK2) (Oryctolagus cuniculus (Rabbit)).